We begin with the raw amino-acid sequence, 428 residues long: Histidine--tRNA ligase (428 aa).

The protein belongs to the class-II aminoacyl-tRNA synthetase family. Homodimer.

It localises to the cytoplasm. The enzyme catalyses tRNA(His) + L-histidine + ATP = L-histidyl-tRNA(His) + AMP + diphosphate + H(+). This chain is Histidine--tRNA ligase, found in Thermosynechococcus vestitus (strain NIES-2133 / IAM M-273 / BP-1).